Here is a 268-residue protein sequence, read N- to C-terminus: Putative S-adenosyl-L-methionine-dependent methyltransferase MAP_0663 (268 aa).

S-adenosyl-L-methionine-binding positions include aspartate 124 and 153–154; that span reads DL.

This sequence belongs to the UPF0677 family.

Its function is as follows. Exhibits S-adenosyl-L-methionine-dependent methyltransferase activity. The polypeptide is Putative S-adenosyl-L-methionine-dependent methyltransferase MAP_0663 (Mycolicibacterium paratuberculosis (strain ATCC BAA-968 / K-10) (Mycobacterium paratuberculosis)).